The chain runs to 156 residues: ATP synthase subunit b (156 aa).

The helical transmembrane segment at 7-27 (LIVQMLVFVVFIGLTMKFIWP) threads the bilayer.

It belongs to the ATPase B chain family. In terms of assembly, F-type ATPases have 2 components, F(1) - the catalytic core - and F(0) - the membrane proton channel. F(1) has five subunits: alpha(3), beta(3), gamma(1), delta(1), epsilon(1). F(0) has three main subunits: a(1), b(2) and c(10-14). The alpha and beta chains form an alternating ring which encloses part of the gamma chain. F(1) is attached to F(0) by a central stalk formed by the gamma and epsilon chains, while a peripheral stalk is formed by the delta and b chains.

Its subcellular location is the cell inner membrane. Its function is as follows. F(1)F(0) ATP synthase produces ATP from ADP in the presence of a proton or sodium gradient. F-type ATPases consist of two structural domains, F(1) containing the extramembraneous catalytic core and F(0) containing the membrane proton channel, linked together by a central stalk and a peripheral stalk. During catalysis, ATP synthesis in the catalytic domain of F(1) is coupled via a rotary mechanism of the central stalk subunits to proton translocation. In terms of biological role, component of the F(0) channel, it forms part of the peripheral stalk, linking F(1) to F(0). This Coxiella burnetii (strain CbuK_Q154) (Coxiella burnetii (strain Q154)) protein is ATP synthase subunit b.